Reading from the N-terminus, the 997-residue chain is FHIP family protein CPIJ015043 (997 aa).

Disordered stretches follow at residues D558–Q579 and N759–A922. The segment covering Q569–Q579 has biased composition (low complexity). Gly residues predominate over residues G763–G780. Low complexity-rich tracts occupy residues S781–P792 and G830–S889. Positions I911–A922 are enriched in gly residues.

This sequence belongs to the FHIP family.

In Culex quinquefasciatus (Southern house mosquito), this protein is FHIP family protein CPIJ015043.